A 225-amino-acid polypeptide reads, in one-letter code: UPF0758 protein XAC3915 (225 aa).

One can recognise an MPN domain in the interval 102 to 224 (ALSDPPSVGR…PVSFAERGWL (123 aa)). The Zn(2+) site is built by H173, H175, and D186. The JAMM motif signature appears at 173–186 (HNHPSGNPEPSEAD).

Belongs to the UPF0758 family.

The polypeptide is UPF0758 protein XAC3915 (Xanthomonas axonopodis pv. citri (strain 306)).